We begin with the raw amino-acid sequence, 913 residues long: DNA polymerase I (913 aa).

A 5'-3' exonuclease domain is found at 1–305 (MSQAPLVLVD…AGENGEAETP (305 aa)). The 3'-5' exonuclease domain occupies 306–501 (IQAEVDYDVV…LHQALWQKLE (196 aa)). The interval 505 to 913 (SLARVLTDIE…GVGSNWDEAH (409 aa)) is polymerase.

This sequence belongs to the DNA polymerase type-A family. Single-chain monomer with multiple functions.

It catalyses the reaction DNA(n) + a 2'-deoxyribonucleoside 5'-triphosphate = DNA(n+1) + diphosphate. In terms of biological role, in addition to polymerase activity, this DNA polymerase exhibits 3'-5' and 5'-3' exonuclease activity. The sequence is that of DNA polymerase I (polA) from Pseudomonas aeruginosa (strain ATCC 15692 / DSM 22644 / CIP 104116 / JCM 14847 / LMG 12228 / 1C / PRS 101 / PAO1).